Here is a 377-residue protein sequence, read N- to C-terminus: MVAPGCSVPGLWVRGFGQCLGSLFTLFSKPLCSAAAAASQPLDAQRLAERLRAQKQQQKTKEPAPTNPVQRRVRELVRFTEQLQRVHPNVLAKALSRGIVHQDKELVVINKPYGLPVHGGPGVKLCISDVLPVLAKILHGPKAKPLHLCHRLDKETTGVMVLAWEKEVAHQVQELFRTRQVTKKYWAITVRVPVPEAGVVDIPIVEKEAQGQQHHHKMTLSPSYRMDDGKMVRVRSSRNAQLAVTQYQVLSSSLSAALLELQPITGIKHQLRVHMSFGLDCPILGDHKYSDWNRLAPQKLSAGILKKLGLQQSKARHLPLHLHACQLTLPALQPQKEELTLLCRPPRYFVNSLRRLGLKMPSRDHSADEEAAQPGAQ.

The disordered stretch occupies residues 51–70 (LRAQKQQQKTKEPAPTNPVQ). Aspartate 153 is an active-site residue.

The protein belongs to the pseudouridine synthase RluA family. As to quaternary structure, interacts with 16S mt-rRNA, mt-tRNA(Phe) and mt-tRNA(Met). Forms a regulatory protein-RNA complex, consisting of RCC1L, NGRN, RPUSD3, RPUSD4, TRUB2, FASTKD2 and 16S mt-rRNA.

The protein localises to the mitochondrion matrix. It is found in the nucleus. It localises to the cytoplasm. The catalysed reaction is uridine in 5S rRNA = pseudouridine in 5S rRNA. It carries out the reaction a uridine in tRNA = a pseudouridine in tRNA. It catalyses the reaction a uridine in mRNA = a pseudouridine in mRNA. Its function is as follows. Catalyzes uridine to pseudouridine isomerization (pseudouridylation) of different mitochondrial RNA substrates. Acts on position 1397 in 16S mitochondrial ribosomal RNA (16S mt-rRNA). This modification is required for the assembly of 16S mt-rRNA into a functional mitochondrial ribosome. As a component of a functional protein-RNA module, consisting of RCC1L, NGRN, RPUSD3, RPUSD4, TRUB2, FASTKD2 and 16S mt-rRNA, controls 16S mt-rRNA abundance and is required for intra-mitochondrial translation. Acts on position 39 in mitochondrial tRNA(Phe). Also catalyzes pseudouridylation of mRNAs in nucleus: acts as a regulator of pre-mRNA splicing by mediating pseudouridylation of pre-mRNAs at locations associated with alternatively spliced regions. Pseudouridylation of pre-mRNAs near splice sites directly regulates mRNA splicing and mRNA 3'-end processing. This is Pseudouridylate synthase RPUSD4, mitochondrial from Bos taurus (Bovine).